The primary structure comprises 191 residues: Molybdenum cofactor guanylyltransferase (191 aa).

GTP is bound by residues 13-15 (LAG), Lys-26, Asp-72, and Asp-102. Position 102 (Asp-102) interacts with Mg(2+).

This sequence belongs to the MobA family. In terms of assembly, monomer. It depends on Mg(2+) as a cofactor.

Its subcellular location is the cytoplasm. The enzyme catalyses Mo-molybdopterin + GTP + H(+) = Mo-molybdopterin guanine dinucleotide + diphosphate. Transfers a GMP moiety from GTP to Mo-molybdopterin (Mo-MPT) cofactor (Moco or molybdenum cofactor) to form Mo-molybdopterin guanine dinucleotide (Mo-MGD) cofactor. In Pseudomonas putida (Arthrobacter siderocapsulatus), this protein is Molybdenum cofactor guanylyltransferase.